Consider the following 65-residue polypeptide: MKALVGFRKKNKKDLYTELLQLLREQFNLRMQSVSGKLKQPHLLRKVRRNIAQVKTLLDSKEEIK.

Belongs to the universal ribosomal protein uL29 family.

This Buchnera aphidicola subsp. Acyrthosiphon pisum (strain 5A) protein is Large ribosomal subunit protein uL29.